Consider the following 351-residue polypeptide: Photosystem II D2 protein (351 aa).

Residues 39-59 form a helical membrane-spanning segment; sequence CAYMAIGGWLTGTTFATSWYT. Position 116 (His116) interacts with chlorophyll a. Residues 123-139 traverse the membrane as a helical segment; it reads GFMLRQFEIARLVGVRP. Gln128 and Asn141 together coordinate pheophytin a. The chain crosses the membrane as a helical span at residues 151–164; the sequence is LFVSVFLIYPLGQS. A chlorophyll a-binding site is contributed by His196. Residues 206–226 form a helical membrane-spanning segment; the sequence is GALLCAIHGATVENTLFEDGD. 2 residues coordinate a plastoquinone: His213 and Phe260. Residue His213 coordinates Fe cation. His267 lines the Fe cation pocket. The chain crosses the membrane as a helical span at residues 277-293; that stretch reads GLWMSAIGVVGLALNLR.

This sequence belongs to the reaction center PufL/M/PsbA/D family. As to quaternary structure, PSII is composed of 1 copy each of membrane proteins PsbA, PsbB, PsbC, PsbD, PsbE, PsbF, PsbH, PsbI, PsbJ, PsbK, PsbL, PsbM, PsbT, PsbX, PsbY, PsbZ, Psb30/Ycf12, peripheral proteins PsbO, CyanoQ (PsbQ), PsbU, PsbV and a large number of cofactors. It forms dimeric complexes. Requires The D1/D2 heterodimer binds P680, chlorophylls that are the primary electron donor of PSII, and subsequent electron acceptors. It shares a non-heme iron and each subunit binds pheophytin, quinone, additional chlorophylls, carotenoids and lipids. There is also a Cl(-1) ion associated with D1 and D2, which is required for oxygen evolution. The PSII complex binds additional chlorophylls, carotenoids and specific lipids. as cofactor.

The protein localises to the cellular thylakoid membrane. It catalyses the reaction 2 a plastoquinone + 4 hnu + 2 H2O = 2 a plastoquinol + O2. Its function is as follows. Photosystem II (PSII) is a light-driven water:plastoquinone oxidoreductase that uses light energy to abstract electrons from H(2)O, generating O(2) and a proton gradient subsequently used for ATP formation. It consists of a core antenna complex that captures photons, and an electron transfer chain that converts photonic excitation into a charge separation. The D1/D2 (PsbA/PsbD) reaction center heterodimer binds P680, the primary electron donor of PSII as well as several subsequent electron acceptors. D2 is needed for assembly of a stable PSII complex. In Prochlorothrix hollandica, this protein is Photosystem II D2 protein.